The following is a 482-amino-acid chain: Proline--tRNA ligase (482 aa).

Belongs to the class-II aminoacyl-tRNA synthetase family. ProS type 3 subfamily. Homodimer.

The protein localises to the cytoplasm. It catalyses the reaction tRNA(Pro) + L-proline + ATP = L-prolyl-tRNA(Pro) + AMP + diphosphate. Catalyzes the attachment of proline to tRNA(Pro) in a two-step reaction: proline is first activated by ATP to form Pro-AMP and then transferred to the acceptor end of tRNA(Pro). This chain is Proline--tRNA ligase, found in Natronomonas pharaonis (strain ATCC 35678 / DSM 2160 / CIP 103997 / JCM 8858 / NBRC 14720 / NCIMB 2260 / Gabara) (Halobacterium pharaonis).